The chain runs to 176 residues: Ribosome maturation factor RimM (176 aa).

In terms of domain architecture, PRC barrel spans 97–176; that stretch reads EDEFYWRDLI…QILVDWDPDF (80 aa).

The protein belongs to the RimM family. In terms of assembly, binds ribosomal protein uS19.

It localises to the cytoplasm. Functionally, an accessory protein needed during the final step in the assembly of 30S ribosomal subunit, possibly for assembly of the head region. Essential for efficient processing of 16S rRNA. May be needed both before and after RbfA during the maturation of 16S rRNA. It has affinity for free ribosomal 30S subunits but not for 70S ribosomes. This is Ribosome maturation factor RimM from Shewanella halifaxensis (strain HAW-EB4).